A 421-amino-acid chain; its full sequence is Gamma-glutamyl phosphate reductase (421 aa).

Belongs to the gamma-glutamyl phosphate reductase family.

It is found in the cytoplasm. The catalysed reaction is L-glutamate 5-semialdehyde + phosphate + NADP(+) = L-glutamyl 5-phosphate + NADPH + H(+). Its pathway is amino-acid biosynthesis; L-proline biosynthesis; L-glutamate 5-semialdehyde from L-glutamate: step 2/2. Functionally, catalyzes the NADPH-dependent reduction of L-glutamate 5-phosphate into L-glutamate 5-semialdehyde and phosphate. The product spontaneously undergoes cyclization to form 1-pyrroline-5-carboxylate. The chain is Gamma-glutamyl phosphate reductase from Leptospira biflexa serovar Patoc (strain Patoc 1 / ATCC 23582 / Paris).